Here is a 764-residue protein sequence, read N- to C-terminus: G-type lectin S-receptor-like serine/threonine-protein kinase SD3-1 (764 aa).

A signal peptide spans 1–24 (MKMLRALLLCLSLVFFLAFQIVVS). Bulb-type lectin domains lie at 25–151 (EIQL…QSFG) and 154–279 (TDTL…WKPV). The Extracellular segment spans residues 25–442 (EIQLGSKLVV…TKSHSICIPC (418 aa)). Asn-92, Asn-198, and Asn-248 each carry an N-linked (GlcNAc...) asparagine glycan. One can recognise an EGF-like; atypical domain in the interval 283 to 320 (VENQCRVFATCGSQVCSFNSSGYTECNCPFNAFVSVSD). 5 disulfide bridges follow: Cys-287-Cys-298, Cys-293-Cys-308, Cys-332-Cys-413, Cys-365-Cys-388, and Cys-369-Cys-375. Residues Asn-301 and Asn-353 are each glycosylated (N-linked (GlcNAc...) asparagine). The 82-residue stretch at 332 to 413 (CKSGFNMVKF…LSSISYVKTC (82 aa)) folds into the Apple domain. Asn-423 is a glycosylation site (N-linked (GlcNAc...) asparagine). The helical transmembrane segment at 443–463 (LVGATSTTLVLFLGFQLGIVV) threads the bilayer. At 464–764 (YIYRRKKKLA…SESSQSLYEP (301 aa)) the chain is on the cytoplasmic side. The region spanning 466–764 (YRRKKKLAKK…SESSQSLYEP (299 aa)) is the Protein kinase domain. ATP is bound by residues 508 to 516 (IGPQIFKGV) and Lys-526. The segment at 586 to 603 (LRSKKLTWRIRTDTCLSV) is caM-binding. The tract at residues 738 to 764 (DPPPPPFACARSSPTNSSESSQSLYEP) is disordered. Over residues 749 to 764 (SSPTNSSESSQSLYEP) the composition is skewed to low complexity.

It localises to the cell membrane. The enzyme catalyses L-seryl-[protein] + ATP = O-phospho-L-seryl-[protein] + ADP + H(+). It catalyses the reaction L-threonyl-[protein] + ATP = O-phospho-L-threonyl-[protein] + ADP + H(+). The polypeptide is G-type lectin S-receptor-like serine/threonine-protein kinase SD3-1 (SD31) (Arabidopsis thaliana (Mouse-ear cress)).